An 81-amino-acid polypeptide reads, in one-letter code: Cytotoxin 8 (81 aa).

An N-terminal signal peptide occupies residues 1–21 (MKTLLLTLVVVTIVCLDLGYT). 4 disulfides stabilise this stretch: Cys24–Cys42, Cys35–Cys59, Cys63–Cys74, and Cys75–Cys80.

It belongs to the three-finger toxin family. Short-chain subfamily. Type IA cytotoxin sub-subfamily. Monomer in solution; Homodimer and oligomer in the presence of negatively charged lipids forming a pore with a size ranging between 20 and 30 Angstroms. As to expression, expressed by the venom gland.

It is found in the secreted. It localises to the target cell membrane. Functionally, shows cytolytic activity on many different cells by forming pore in lipid membranes. In vivo, increases heart rate or kills the animal by cardiac arrest. In addition, it binds to heparin with high affinity, interacts with Kv channel-interacting protein 1 (KCNIP1) in a calcium-independent manner, and binds to integrin alpha-V/beta-3 (ITGAV/ITGB3) with moderate affinity. The sequence is that of Cytotoxin 8 from Naja atra (Chinese cobra).